The chain runs to 183 residues: MKGLVLSFALVALSALCVYGDVPIQPDFQEDKILGKWYGIGLASNSNWFQSKKQQLKMCTTVITPTADGNLDVVATFPKLDRCEKKSMTYIKTEQPGRFLSKSPRYGSDHVIRVVESNYDEYTLMHTIKTKGNEVNTIVSLFGRRKTLSPELLDKFQQFAKEQGLTDDNILILPQTDSCMSEV.

Positions 1 to 20 are cleaved as a signal peptide; the sequence is MKGLVLSFALVALSALCVYG. A disulfide bridge connects residues C83 and C179.

This sequence belongs to the calycin superfamily. Lipocalin family. Monomer. As to expression, expressed mainly in choroid plexus. Much lower expression in other brain areas, and absent from liver.

The protein localises to the secreted. In terms of biological role, might have a transport function across the blood brain barrier. Is supposed to have similar functions as a transthyretin which must have evolved after the stage of the amphibians in evolution. The chain is Lipocalin from Rhinella marina (Cane toad).